The following is a 400-amino-acid chain: Formate-dependent phosphoribosylglycinamide formyltransferase (400 aa).

N(1)-(5-phospho-beta-D-ribosyl)glycinamide is bound by residues 22–23 and Glu82; that span reads EL. ATP contacts are provided by residues Arg115, Lys157, 162-167, 197-200, and Glu205; these read SSGKGQ and EGFV. The ATP-grasp domain maps to 120-315; the sequence is RLAAETLGLP…EFELHARAIL (196 aa). Residues Glu274 and Glu286 each contribute to the Mg(2+) site. N(1)-(5-phospho-beta-D-ribosyl)glycinamide is bound by residues Asp293, Lys362, and 369–370; that span reads RR.

It belongs to the PurK/PurT family. Homodimer.

The enzyme catalyses N(1)-(5-phospho-beta-D-ribosyl)glycinamide + formate + ATP = N(2)-formyl-N(1)-(5-phospho-beta-D-ribosyl)glycinamide + ADP + phosphate + H(+). The protein operates within purine metabolism; IMP biosynthesis via de novo pathway; N(2)-formyl-N(1)-(5-phospho-D-ribosyl)glycinamide from N(1)-(5-phospho-D-ribosyl)glycinamide (formate route): step 1/1. Involved in the de novo purine biosynthesis. Catalyzes the transfer of formate to 5-phospho-ribosyl-glycinamide (GAR), producing 5-phospho-ribosyl-N-formylglycinamide (FGAR). Formate is provided by PurU via hydrolysis of 10-formyl-tetrahydrofolate. In Mycolicibacterium gilvum (strain PYR-GCK) (Mycobacterium gilvum (strain PYR-GCK)), this protein is Formate-dependent phosphoribosylglycinamide formyltransferase.